Reading from the N-terminus, the 322-residue chain is NADH-quinone oxidoreductase subunit H (322 aa).

The next 8 helical transmembrane spans lie at 12 to 32 (IGKALIVLVGIVGAGAFMSFI), 79 to 99 (IFILAPIIAFTAFILAFAVVP), 111 to 131 (VGLLYILAIAGLAVYAVLFAG), 151 to 171 (LSYEVFLGLSLMGIVIQTGSF), 183 to 203 (LWNVVPQFLGFITFLFAGVAV), 234 to 254 (FFVGEYIGIVLISSLIVTLFF), 262 to 282 (LPPFFWFALKTACFMVFFILL), and 301 to 321 (VCLPLTLINMLITAAVVLMNV).

This sequence belongs to the complex I subunit 1 family. In terms of assembly, NDH-1 is composed of 13 different subunits. Subunits NuoA, H, J, K, L, M, N constitute the membrane sector of the complex.

It localises to the cell inner membrane. It catalyses the reaction a quinone + NADH + 5 H(+)(in) = a quinol + NAD(+) + 4 H(+)(out). In terms of biological role, NDH-1 shuttles electrons from NADH, via FMN and iron-sulfur (Fe-S) centers, to quinones in the respiratory chain. The immediate electron acceptor for the enzyme in this species is believed to be ubiquinone. Couples the redox reaction to proton translocation (for every two electrons transferred, four hydrogen ions are translocated across the cytoplasmic membrane), and thus conserves the redox energy in a proton gradient. This subunit may bind ubiquinone. This Shewanella oneidensis (strain ATCC 700550 / JCM 31522 / CIP 106686 / LMG 19005 / NCIMB 14063 / MR-1) protein is NADH-quinone oxidoreductase subunit H.